A 220-amino-acid chain; its full sequence is MNKAKLIDHTLLKTDSTKEQIDTIINEAKAYQFKSVCVNPTHVQYASEQLKGTDVLVCTVIGFPLGATTTAVKSYETKDAINNGAQEIDMVINIGALKDGRFDKVQNDIEAVVQAANGKTVKVIIETVLLTEKEKIKACQLSEAAGAHFVKTSTGFAGGGATVEDVKLMKDTVGDRLEVKASGGVRNLEDFNNMIEAGATRIGASAGVQIIQGLESNTDY.

The Proton donor/acceptor role is filled by Asp-89. Lys-151 (schiff-base intermediate with acetaldehyde) is an active-site residue. The active-site Proton donor/acceptor is the Lys-180.

This sequence belongs to the DeoC/FbaB aldolase family. DeoC type 1 subfamily.

It localises to the cytoplasm. The enzyme catalyses 2-deoxy-D-ribose 5-phosphate = D-glyceraldehyde 3-phosphate + acetaldehyde. The protein operates within carbohydrate degradation; 2-deoxy-D-ribose 1-phosphate degradation; D-glyceraldehyde 3-phosphate and acetaldehyde from 2-deoxy-alpha-D-ribose 1-phosphate: step 2/2. Its function is as follows. Catalyzes a reversible aldol reaction between acetaldehyde and D-glyceraldehyde 3-phosphate to generate 2-deoxy-D-ribose 5-phosphate. The protein is Deoxyribose-phosphate aldolase of Staphylococcus epidermidis (strain ATCC 35984 / DSM 28319 / BCRC 17069 / CCUG 31568 / BM 3577 / RP62A).